The following is a 239-amino-acid chain: Tetraspanin-9 (239 aa).

The Cytoplasmic portion of the chain corresponds to 1-13; the sequence is MARGCLCCLKYMM. Residues 14-34 form a helical membrane-spanning segment; sequence FLFNLIFWLCGCGLLGVGIWL. Topologically, residues 35–55 are extracellular; it reads SVSQGNFATFSPSFPSLSAAN. The helical transmembrane segment at 56–76 threads the bilayer; the sequence is LVIAIGTIVMVTGFLGCLGAI. Residues 77 to 85 lie on the Cytoplasmic side of the membrane; that stretch reads KENKCLLLS. Residues 86–106 form a helical membrane-spanning segment; it reads FFIVLLVILLAELILLILFFV. Topologically, residues 107 to 203 are extracellular; sequence YMDKVNENAK…VKMWFDDNKH (97 aa). Asparagine 180 carries an N-linked (GlcNAc...) asparagine glycan. The helical transmembrane segment at 204-224 threads the bilayer; the sequence is VLGTVGMCILIMQILGMAFSM. The Cytoplasmic portion of the chain corresponds to 225–239; the sequence is TLFQHIHRTGKKYDA.

Belongs to the tetraspanin (TM4SF) family. As to quaternary structure, found in a complex with GP6. Post-translationally, glycosylated. Expressed in megakaryocytes and platelets (at protein level).

It is found in the membrane. In Homo sapiens (Human), this protein is Tetraspanin-9 (TSPAN9).